The chain runs to 2469 residues: Large tegument protein deneddylase (2469 aa).

The tract at residues 1 to 237 is deubiquitination activity; sequence MDIHPLFKKL…LHGPNIDLTS (237 aa). In terms of domain architecture, Peptidase C76 spans 13–225; sequence EGIASTHQAD…IMNHYRVINY (213 aa). Residues Cys-33, Asp-163, and His-165 contribute to the active site. 2 disordered regions span residues 244 to 318 and 346 to 377; these read EISP…ALTP and HPVE…DDDN. The span at 260-271 shows a compositional bias: pro residues; the sequence is PKTPRTPKPATP. A region of interest (interaction with inner tegument protein) is located at residue Ser-286. The segment covering 295–309 has biased composition (basic residues); it reads KPPKIPKTSKKSKKV. Over residues 352-365 the composition is skewed to polar residues; it reads TPGTDSLLSGINST.

It belongs to the herpesviridae large tegument protein family. As to quaternary structure, interacts with host CUL1 and CUL4A; these interactions inhibit the E3 ligase activity of cullins. Interacts with inner tegument protein. Interacts with capsid vertex specific component CVC2. Interacts with the major capsid protein/MCP.

The protein localises to the virion tegument. Its subcellular location is the host cytoplasm. It localises to the host nucleus. The catalysed reaction is Thiol-dependent hydrolysis of ester, thioester, amide, peptide and isopeptide bonds formed by the C-terminal Gly of ubiquitin (a 76-residue protein attached to proteins as an intracellular targeting signal).. Functionally, large tegument protein that plays multiple roles in the viral cycle. During viral entry, remains associated with the capsid while most of the tegument is detached and participates in the capsid transport toward the host nucleus. Plays a role in the routing of the capsid at the nuclear pore complex and subsequent uncoating. Within the host nucleus, acts as a deneddylase and promotes the degradation of nuclear CRLs (cullin-RING ubiquitin ligases) and thereby stabilizes nuclear CRL substrates, while cytoplasmic CRLs remain unaffected. These modifications prevent host cell cycle S-phase progression and create a favorable environment allowing efficient viral genome replication. Participates later in the secondary envelopment of capsids. Indeed, plays a linker role for the association of the outer viral tegument to the capsids together with the inner tegument protein. This Saimiriine herpesvirus 2 (strain 11) (SaHV-2) protein is Large tegument protein deneddylase (64).